A 238-amino-acid polypeptide reads, in one-letter code: uncharacterized protein (238 aa).

Residues 1 to 20 form a disordered region; sequence MPNLHSLPLGTRPENAIRNN.

This sequence belongs to the PEP2 family.

This is an uncharacterized protein from Emericella nidulans (strain FGSC A4 / ATCC 38163 / CBS 112.46 / NRRL 194 / M139) (Aspergillus nidulans).